The chain runs to 2352 residues: Ectopic P granules protein 5 (2352 aa).

2 disordered regions span residues Met1 to Arg112 and Lys1315 to Lys1335. The span at Asp66–Arg81 shows a compositional bias: basic and acidic residues.

Belongs to the EPG5 family. In terms of tissue distribution, expressed in pharyngeal and body wall muscles and intestine cells.

It is found in the cytoplasm. Its subcellular location is the cytoplasmic vesicle. The protein resides in the phagosome membrane. In terms of biological role, involved in the maturation of autophagosomes into autolysosomes during starvation-induced autotrophy. Specifically, involved in the clearance of apoptotic cells by promoting the delivery of engulfed apoptotic cells to the lysosome. The polypeptide is Ectopic P granules protein 5 (Caenorhabditis elegans).